The following is a 301-amino-acid chain: Homoserine O-acetyltransferase (301 aa).

Cys142 serves as the catalytic Acyl-thioester intermediate. The substrate site is built by Lys163 and Ser192. His235 (proton acceptor) is an active-site residue. The active site involves Glu237. Position 249 (Arg249) interacts with substrate.

This sequence belongs to the MetA family.

It localises to the cytoplasm. It catalyses the reaction L-homoserine + acetyl-CoA = O-acetyl-L-homoserine + CoA. The protein operates within amino-acid biosynthesis; L-methionine biosynthesis via de novo pathway; O-acetyl-L-homoserine from L-homoserine: step 1/1. Functionally, transfers an acetyl group from acetyl-CoA to L-homoserine, forming acetyl-L-homoserine. This is Homoserine O-acetyltransferase from Succinatimonas hippei (strain DSM 22608 / JCM 16073 / KCTC 15190 / YIT 12066).